The sequence spans 286 residues: Probable tRNA(His) guanylyltransferase (286 aa).

Mg(2+)-binding residues include aspartate 29, glycine 30, and aspartate 76. GTP is bound by residues 29-34 and 75-76; these read DGKKFH and SD.

Belongs to the tRNA(His) guanylyltransferase family. Requires Mg(2+) as cofactor.

It carries out the reaction a 5'-end ribonucleotide-tRNA(His) + GTP + ATP + H2O = a 5'-end phospho-guanosine-ribonucleotide-tRNA(His) + AMP + 2 diphosphate + H(+). Adds a GMP to the 5'-end of tRNA(His) after transcription and RNase P cleavage. The polypeptide is Probable tRNA(His) guanylyltransferase (Drosophila melanogaster (Fruit fly)).